Consider the following 543-residue polypeptide: Cytochrome P450 monooxygenase sphH (543 aa).

A run of 2 helical transmembrane segments spans residues 1–21 (MGPIHNYFGVVCLGIAASVYF) and 32–52 (IATFAVLLTGIAISKLLYQLF). Cys-487 is a heme binding site.

Belongs to the cytochrome P450 family. Requires heme as cofactor.

The protein resides in the membrane. The catalysed reaction is presphingofungin + 2 reduced [NADPH--hemoprotein reductase] + O2 = sphingofungin B1 + 2 oxidized [NADPH--hemoprotein reductase] + H2O + 2 H(+). Its pathway is secondary metabolite biosynthesis. Its function is as follows. Cytochrome P450 monooxygenase; part of the gene cluster that mediates the biosynthesis of sphingofungins, bioactive molecules acting as sphingolipid inhibitors via inhibiting serine palmitoyl transferase (SPT). Within the pathway, sphH catalyzes the conversion of presphingofungin into sphingofungin B1 via hydroxylagtion at position C-14. Sphingofungin biosynthesis starts with the PKS sphB that produces an C18 polyketide precursor 3-hydroxyoctadeca-4,10-dienoyl-ACP containing one delta-6 desaturation and one delta-12 desaturation. The aminoacyl transferase sphA uses the sphB product to produce 3-keto-presphingofungin by adding an aminomalonate molecule. SphF then reduces the C-3 ketone of 3-keto-presphingofungin which leads to presphingofungin. The cytochrome P450 monooxygenase sphH converts presphingofungin into sphingofungin B1 which is further converted to sphingofungin B by the dioxygenase sphC. SphC is also able to convert presphingofungin into sphingofungin B2. The acetyltransferase sphE acetylates sphingofungin B to produce sphingofungin C, but can also convert sphingofungin B1 into sphingofungin C1 and sphingofungin B2 into sphingofungin C2. Finally, sphingofungin C can be spontaneously converted into sphingofungin D. In Aspergillus fumigatus (strain CBS 144.89 / FGSC A1163 / CEA10) (Neosartorya fumigata), this protein is Cytochrome P450 monooxygenase sphH.